The primary structure comprises 108 residues: Large ribosomal subunit protein uL24 (108 aa).

This sequence belongs to the universal ribosomal protein uL24 family. As to quaternary structure, part of the 50S ribosomal subunit.

Its function is as follows. One of two assembly initiator proteins, it binds directly to the 5'-end of the 23S rRNA, where it nucleates assembly of the 50S subunit. Functionally, one of the proteins that surrounds the polypeptide exit tunnel on the outside of the subunit. This chain is Large ribosomal subunit protein uL24, found in Trichlorobacter lovleyi (strain ATCC BAA-1151 / DSM 17278 / SZ) (Geobacter lovleyi).